A 326-amino-acid chain; its full sequence is Dehydrogenase/reductase SDR family protein 7-like (326 aa).

Residues 1–17 are Cytoplasmic-facing; sequence MKVQDMDKCAPSSDWNV. The helical; Signal-anchor for type II membrane protein transmembrane segment at 18–38 threads the bilayer; that stretch reads LYWVLGTVLMPVALPLAIINI. Over 39–326 the chain is Peroxisomal; that stretch reads WQRFQAQKFR…KLENAEKKST (288 aa). An NAD(+)-binding site is contributed by 57–81; it reads LITGASSGLGESLAHVFYRAGCRVI. Serine 193 contributes to the substrate binding site. The Proton acceptor role is filled by tyrosine 206.

The protein belongs to the short-chain dehydrogenases/reductases (SDR) family.

The protein localises to the peroxisome membrane. Putative oxidoreductase. This Drosophila melanogaster (Fruit fly) protein is Dehydrogenase/reductase SDR family protein 7-like.